Reading from the N-terminus, the 317-residue chain is Beta-ketoacyl-[acyl-carrier-protein] synthase III (317 aa).

Residues cysteine 112 and histidine 244 contribute to the active site. The segment at 245–249 is ACP-binding; sequence QANLR. Asparagine 274 is an active-site residue.

Belongs to the thiolase-like superfamily. FabH family. As to quaternary structure, homodimer.

Its subcellular location is the cytoplasm. It catalyses the reaction malonyl-[ACP] + acetyl-CoA + H(+) = 3-oxobutanoyl-[ACP] + CO2 + CoA. It participates in lipid metabolism; fatty acid biosynthesis. In terms of biological role, catalyzes the condensation reaction of fatty acid synthesis by the addition to an acyl acceptor of two carbons from malonyl-ACP. Catalyzes the first condensation reaction which initiates fatty acid synthesis and may therefore play a role in governing the total rate of fatty acid production. Possesses both acetoacetyl-ACP synthase and acetyl transacylase activities. Its substrate specificity determines the biosynthesis of branched-chain and/or straight-chain of fatty acids. The protein is Beta-ketoacyl-[acyl-carrier-protein] synthase III of Shigella dysenteriae serotype 1 (strain Sd197).